A 441-amino-acid chain; its full sequence is Ribosomal protein uS12 methylthiotransferase RimO (441 aa).

The MTTase N-terminal domain occupies 8-118; sequence PKIGFVSLGC…VLQHVHHYVP (111 aa). Residues Cys17, Cys53, Cys82, Cys150, Cys154, and Cys157 each coordinate [4Fe-4S] cluster. In terms of domain architecture, Radical SAM core spans 136 to 373; that stretch reads LTPRHYAYLK…MQLQQQISAE (238 aa). The region spanning 376-441 is the TRAM domain; the sequence is QEKVGREILV…DEYDLWGSRV (66 aa).

It belongs to the methylthiotransferase family. RimO subfamily. [4Fe-4S] cluster is required as a cofactor.

The protein resides in the cytoplasm. It catalyses the reaction L-aspartate(89)-[ribosomal protein uS12]-hydrogen + (sulfur carrier)-SH + AH2 + 2 S-adenosyl-L-methionine = 3-methylsulfanyl-L-aspartate(89)-[ribosomal protein uS12]-hydrogen + (sulfur carrier)-H + 5'-deoxyadenosine + L-methionine + A + S-adenosyl-L-homocysteine + 2 H(+). Functionally, catalyzes the methylthiolation of an aspartic acid residue of ribosomal protein uS12. The protein is Ribosomal protein uS12 methylthiotransferase RimO of Salmonella paratyphi B (strain ATCC BAA-1250 / SPB7).